The following is a 415-amino-acid chain: rRNA methyltransferase 3, mitochondrial (415 aa).

The transit peptide at 1–47 directs the protein to the mitochondrion; the sequence is MAALCRGTVRACILKPLGLSVSLQVKRNVRALRRTPVRVLPAAEKGR. The tract at residues 41-73 is disordered; it reads PAAEKGRERKEVEARRPQQPRQSEYQTRTSQGV. Positions 44–56 are enriched in basic and acidic residues; the sequence is EKGRERKEVEARR. The span at 59–73 shows a compositional bias: polar residues; that stretch reads QPRQSEYQTRTSQGV. S-adenosyl-L-methionine contacts are provided by glycine 357, isoleucine 381, and leucine 390.

It belongs to the class IV-like SAM-binding methyltransferase superfamily. RNA methyltransferase TrmH family.

It localises to the mitochondrion. It carries out the reaction a uridine in rRNA + S-adenosyl-L-methionine = a 2'-O-methyluridine in rRNA + S-adenosyl-L-homocysteine + H(+). In terms of biological role, S-adenosyl-L-methionine-dependent 2'-O-ribose methyltransferase that catalyzes the formation of 2'-O-methylguanosine at position 1370 (Gm1370) in the mitochondrial large subunit ribosomal RNA (mtLSU rRNA), a conserved modification in the peptidyl transferase domain of the mtLSU rRNA. Also required for formation of 2'-O-methyluridine at position 1369 (Um1369) mediated by MRM2. The chain is rRNA methyltransferase 3, mitochondrial from Xenopus tropicalis (Western clawed frog).